We begin with the raw amino-acid sequence, 213 residues long: Orotate phosphoribosyltransferase (213 aa).

A 5-phospho-alpha-D-ribose 1-diphosphate-binding site is contributed by Lys-26. 34-35 (FF) is a binding site for orotate. Residues 72-73 (YK), Arg-99, Lys-100, Lys-103, His-105, and 124-132 (DDVITAGTA) each bind 5-phospho-alpha-D-ribose 1-diphosphate. Residues Thr-128 and Arg-156 each contribute to the orotate site.

This sequence belongs to the purine/pyrimidine phosphoribosyltransferase family. PyrE subfamily. In terms of assembly, homodimer. Mg(2+) is required as a cofactor.

It carries out the reaction orotidine 5'-phosphate + diphosphate = orotate + 5-phospho-alpha-D-ribose 1-diphosphate. It functions in the pathway pyrimidine metabolism; UMP biosynthesis via de novo pathway; UMP from orotate: step 1/2. In terms of biological role, catalyzes the transfer of a ribosyl phosphate group from 5-phosphoribose 1-diphosphate to orotate, leading to the formation of orotidine monophosphate (OMP). The polypeptide is Orotate phosphoribosyltransferase (Pseudomonas syringae pv. syringae (strain B728a)).